We begin with the raw amino-acid sequence, 924 residues long: Periplasmic nitrate reductase (924 aa).

A signal peptide (tat-type signal) is located at residues 1-29 (MNRRDFIKNTAIASACGVAGLSVPSSVLA). A 4Fe-4S Mo/W bis-MGD-type domain is found at 35-91 (WRWDKAVCRFCGTGCGILVARQDGKIVAVKGDPAAPVNRGLNCIKGYFNAKIMYGED). [4Fe-4S] cluster-binding residues include cysteine 42, cysteine 45, cysteine 49, and cysteine 77. Residues lysine 79, glutamine 147, asparagine 172, cysteine 176, 209 to 216 (WGANMAEM), methionine 417, glutamine 421, asparagine 527, 552 to 553 (SD), lysine 575, aspartate 602, and 814 to 823 (TGRVLEHWHS) contribute to the Mo-bis(molybdopterin guanine dinucleotide) site. Tryptophan 890 is a binding site for substrate. Positions 898 and 915 each coordinate Mo-bis(molybdopterin guanine dinucleotide).

Belongs to the prokaryotic molybdopterin-containing oxidoreductase family. NasA/NapA/NarB subfamily. In terms of assembly, component of the periplasmic nitrate reductase NapAB complex composed of NapA and NapB. [4Fe-4S] cluster serves as cofactor. Mo-bis(molybdopterin guanine dinucleotide) is required as a cofactor. Predicted to be exported by the Tat system. The position of the signal peptide cleavage has not been experimentally proven.

It is found in the periplasm. The catalysed reaction is 2 Fe(II)-[cytochrome] + nitrate + 2 H(+) = 2 Fe(III)-[cytochrome] + nitrite + H2O. Functionally, catalytic subunit of the periplasmic nitrate reductase complex NapAB. Receives electrons from NapB and catalyzes the reduction of nitrate to nitrite. This chain is Periplasmic nitrate reductase, found in Campylobacter lari (strain RM2100 / D67 / ATCC BAA-1060).